We begin with the raw amino-acid sequence, 1457 residues long: Receptor-type tyrosine-protein phosphatase kappa (1457 aa).

The first 25 residues, 1-25 (MDVAAAALPAFVALWLLYPWPLLGS), serve as a signal peptide directing secretion. Residues 26 to 752 (ALGQFSAGGC…PAKQTDRVVK (727 aa)) lie on the Extracellular side of the membrane. Residues 30–193 (FSAGGCTFDD…IQVLSYPCDK (164 aa)) enclose the MAM domain. 3 N-linked (GlcNAc...) asparagine glycosylation sites follow: Asn-100, Asn-139, and Asn-210. In terms of domain architecture, Ig-like C2-type spans 195-280 (PHFLRLGDVE…TQSERGSGVS (86 aa)). A disulfide bond links Cys-215 and Cys-269. 4 consecutive Fibronectin type-III domains span residues 293–388 (PIAP…CAEP), 391–487 (TPKT…TDED), 490–594 (GPVP…SAPS), and 595–688 (LPDY…TVGD). Asn-415, Asn-423, Asn-435, Asn-461, Asn-551, Asn-585, Asn-589, Asn-606, and Asn-689 each carry an N-linked (GlcNAc...) asparagine glycan. The chain crosses the membrane as a helical span at residues 753–774 (IAGISAGILVFILLLLVVIVIV). The Cytoplasmic segment spans residues 775–1457 (KKSKLAKKRK…DVALEYLESS (683 aa)). A Phosphoserine modification is found at Ser-868. 2 Tyrosine-protein phosphatase domains span residues 899–1159 (FKEE…ILEA) and 1191–1453 (LKDE…ALEY). Substrate is bound by residues Asp-1068, 1100 to 1106 (CSAGAGR), and Gln-1144. Cys-1100 (phosphocysteine intermediate) is an active-site residue. Cys-1394 serves as the catalytic Phosphocysteine intermediate.

It belongs to the protein-tyrosine phosphatase family. Receptor class 2B subfamily. In terms of processing, this protein undergoes proteolytic processing. As to expression, high levels in liver and kidney. Lower levels in lung, brain and heart. Not seen in spleen and testis.

It is found in the membrane. It catalyses the reaction O-phospho-L-tyrosyl-[protein] + H2O = L-tyrosyl-[protein] + phosphate. In terms of biological role, regulation of processes involving cell contact and adhesion such as growth control, tumor invasion, and metastasis. Negative regulator of EGFR signaling pathway. Forms complexes with beta-catenin and gamma-catenin/plakoglobin. Beta-catenin may be a substrate for the catalytic activity of PTPRK/PTP-kappa. This is Receptor-type tyrosine-protein phosphatase kappa (Ptprk) from Mus musculus (Mouse).